Here is a 2381-residue protein sequence, read N- to C-terminus: Myb-like protein U (2381 aa).

Disordered regions lie at residues 1–85, 148–167, 178–492, and 641–696; these read MKTK…TSNN, SSSG…GGIS, PTIP…NNNN, and NINN…GDEM. Low complexity-rich tracts occupy residues 30–41 and 64–79; these read SKSSSKVSQSSS and TIPA…PTLT. Low complexity-rich tracts occupy residues 192 to 204, 225 to 261, and 291 to 315; these read NLSS…NILS, ENVN…SSSS, and SNKS…NNKK. Over residues 331-343 the composition is skewed to acidic residues; that stretch reads SEYDSSDSSDMDL. Low complexity predominate over residues 363 to 405; the sequence is TTKPNNSNSNNNNNNNSINSTIPASNNINSANNSKTTNKNITS. Residues 421–430 are compositionally biased toward polar residues; sequence SETPILTSVK. 2 stretches are compositionally biased toward low complexity: residues 435-492 and 641-692; these read QQIP…NNNN and NINN…NNNN. In terms of domain architecture, Myb-like spans 856–899; it reads WHEEEKLLFRELFCAYGRDWQMVSTLMCGTKSPTQIKNFYYDVR. Disordered stretches follow at residues 932–1024, 1068–1093, 1145–1207, 1295–1339, 1422–1474, 1597–1647, 1667–1849, 1961–1985, 2055–2106, and 2122–2280; these read KPEQ…ETPP, INQS…NINP, TSST…SNQE, STTT…PPID, PYYP…LSTP, PPAT…TTIV, PIVK…PPPV, TTVP…NGLA, TSTV…NGLT, and LSGI…NKND. Over residues 936-953 the composition is skewed to low complexity; the sequence is NVNSNNNNNGGGNSLKDG. Basic residues predominate over residues 982–995; it reads VKKKSRTASKRSFR. Polar residues predominate over residues 1000–1013; it reads ANETNRTPKNQPKP. Low complexity-rich tracts occupy residues 1069 to 1092, 1145 to 1186, 1195 to 1205, and 1306 to 1325; these read NQSS…NNIN, TSST…TGSA, VNNNNNNNLSN, and TTTP…QLQQ. The segment covering 1326 to 1337 has biased composition (pro residues); that stretch reads LPPPPPPPPKPP. A compositionally biased stretch (low complexity) spans 1427-1474; that stretch reads PSSTTTNSATSTPTSTPTSTPSTSASTLTPTSTPTSTPVPAPTSLSTP. A compositionally biased stretch (pro residues) spans 1597-1606; the sequence is PPATITPILP. A compositionally biased stretch (low complexity) spans 1618–1637; sequence SSSSSSSSSSSSSSSSSSSS. Composition is skewed to polar residues over residues 1638 to 1647 and 1671 to 1701; these read TTKNNSTTIV and QESN…KTLL. Composition is skewed to low complexity over residues 1702–1735 and 1743–1809; these read PSNS…NPSS and TSNK…TLKP. A compositionally biased stretch (polar residues) spans 1829-1844; it reads APTNSTNQNTIPNATT. Low complexity-rich tracts occupy residues 1961–1970 and 2065–2097; these read TTVPGTTTTT and NNMT…QQST. A compositionally biased stretch (polar residues) spans 2129–2138; that stretch reads NTLSGKSPTP. Low complexity predominate over residues 2154 to 2209; the sequence is PSLSSSSANPISITNNTTSLSQQSNTTNTMPSTVSLSSGSTSINSNSSNSKSLRSP. Residues 2210–2278 are compositionally biased toward basic and acidic residues; it reads KSSDNDGKES…NNNDKFDSNK (69 aa).

The chain is Myb-like protein U (mybU) from Dictyostelium discoideum (Social amoeba).